The sequence spans 117 residues: Large ribosomal subunit protein bL20 (117 aa).

Belongs to the bacterial ribosomal protein bL20 family.

Functionally, binds directly to 23S ribosomal RNA and is necessary for the in vitro assembly process of the 50S ribosomal subunit. It is not involved in the protein synthesizing functions of that subunit. This chain is Large ribosomal subunit protein bL20, found in Oleidesulfovibrio alaskensis (strain ATCC BAA-1058 / DSM 17464 / G20) (Desulfovibrio alaskensis).